A 156-amino-acid chain; its full sequence is D-aminoacyl-tRNA deacylase (156 aa).

The short motif at 142-143 is the Gly-cisPro motif, important for rejection of L-amino acids element; that stretch reads GP.

Belongs to the DTD family. In terms of assembly, homodimer.

Its subcellular location is the cytoplasm. The catalysed reaction is glycyl-tRNA(Ala) + H2O = tRNA(Ala) + glycine + H(+). It carries out the reaction a D-aminoacyl-tRNA + H2O = a tRNA + a D-alpha-amino acid + H(+). Its function is as follows. An aminoacyl-tRNA editing enzyme that deacylates mischarged D-aminoacyl-tRNAs. Also deacylates mischarged glycyl-tRNA(Ala), protecting cells against glycine mischarging by AlaRS. Acts via tRNA-based rather than protein-based catalysis; rejects L-amino acids rather than detecting D-amino acids in the active site. By recycling D-aminoacyl-tRNA to D-amino acids and free tRNA molecules, this enzyme counteracts the toxicity associated with the formation of D-aminoacyl-tRNA entities in vivo and helps enforce protein L-homochirality. In Cupriavidus pinatubonensis (strain JMP 134 / LMG 1197) (Cupriavidus necator (strain JMP 134)), this protein is D-aminoacyl-tRNA deacylase.